A 122-amino-acid polypeptide reads, in one-letter code: U1 small nuclear ribonucleoprotein C (122 aa).

Residues 4-36 (YFCDYCDTYLTHDSPSVRKTHCSGRKHKDNVKM) form a Matrin-type zinc finger.

The protein belongs to the U1 small nuclear ribonucleoprotein C family. In terms of assembly, U1 snRNP is composed of the 7 core Sm proteins B/B', D1, D2, D3, E, F and G that assemble in a heptameric protein ring on the Sm site of the small nuclear RNA to form the core snRNP, and at least 3 U1 snRNP-specific proteins U1-70K, U1-A and U1-C. U1-C interacts with U1 snRNA and the 5' splice-site region of the pre-mRNA.

It is found in the nucleus. Its function is as follows. Component of the spliceosomal U1 snRNP, which is essential for recognition of the pre-mRNA 5' splice-site and the subsequent assembly of the spliceosome. U1-C is directly involved in initial 5' splice-site recognition for both constitutive and regulated alternative splicing. The interaction with the 5' splice-site seems to precede base-pairing between the pre-mRNA and the U1 snRNA. Stimulates commitment or early (E) complex formation by stabilizing the base pairing of the 5' end of the U1 snRNA and the 5' splice-site region. The sequence is that of U1 small nuclear ribonucleoprotein C from Ciona intestinalis (Transparent sea squirt).